The following is a 418-amino-acid chain: Argininosuccinate synthase (418 aa).

16-24 (AYSGGLDTS) is an ATP binding site. Tyrosine 95 provides a ligand contact to L-citrulline. Glycine 125 provides a ligand contact to ATP. Residues threonine 127, asparagine 131, and aspartate 132 each contribute to the L-aspartate site. Residue asparagine 131 participates in L-citrulline binding. L-citrulline-binding residues include arginine 135, serine 183, glutamate 267, and tyrosine 279.

Belongs to the argininosuccinate synthase family. Type 1 subfamily. As to quaternary structure, homotetramer.

It localises to the cytoplasm. The enzyme catalyses L-citrulline + L-aspartate + ATP = 2-(N(omega)-L-arginino)succinate + AMP + diphosphate + H(+). The protein operates within amino-acid biosynthesis; L-arginine biosynthesis; L-arginine from L-ornithine and carbamoyl phosphate: step 2/3. The protein is Argininosuccinate synthase of Bifidobacterium adolescentis (strain ATCC 15703 / DSM 20083 / NCTC 11814 / E194a).